The following is a 592-amino-acid chain: Ichor (592 aa).

The span at 114–123 (NNNYMQSAYH) shows a compositional bias: polar residues. Disordered stretches follow at residues 114 to 156 (NNNY…VSSS), 343 to 377 (LQNRLQNGPPNGNSSGGGGGANQGAGIKGDPQAPT), 416 to 439 (LSNPTNNQATGNLHQQGGYSMQAS), and 459 to 527 (HTTT…DLSG). The segment covering 124–148 (PQNQSNPTSTTQSNGGSNSNSNNSN) has biased composition (low complexity). Residues 356-369 (SSGGGGGANQGAGI) show a composition bias toward gly residues. Residues 459-469 (HTTTASTTGSE) show a composition bias toward polar residues. Over residues 488 to 500 (QQQQQQQQQQQQQ) the composition is skewed to low complexity. A compositionally biased stretch (polar residues) spans 507 to 524 (PTTPQMSAISPSGFSASD). 2 C2H2-type zinc fingers span residues 536 to 558 (HRCSICNRGFLNKSNIKVHLRTH) and 564 to 586 (FRCDVCAKAFRQKAHLLKHQQIH).

The protein resides in the nucleus. In terms of biological role, transcriptional activator. In tracheal terminal cells, regulates the transcription of factors involved in the formation of a mature apical extracellular matrix (aECM) which is essential for the integrity and shape of seamless tubes. The protein is Ichor of Drosophila melanogaster (Fruit fly).